Reading from the N-terminus, the 513-residue chain is Zinc finger CCCH-type with G patch domain-containing protein (513 aa).

The C3H1-type zinc finger occupies 155–178; that stretch reads PCSYYLEGECRFDEAKCRFSHGAL. Composition is skewed to acidic residues over residues 252-261 and 273-283; these read DQDEDDELSS and SDEAESDMDDL. A disordered region spans residues 252-283; sequence DQDEDDELSSEESTSSMRDASSDEAESDMDDL. Residues 312 to 358 enclose the G-patch domain; sequence TRGIGSKLMEKMGYIHGTGLGSDGRGIVTPVSAQILPQGRSLDACME. The segment covering 477-495 has biased composition (polar residues); it reads QVQMQSHKQELATLQAQER. The segment at 477 to 513 is disordered; it reads QVQMQSHKQELATLQAQERSLSKEQQTRKSKNKMFEF. Residues 496-513 show a composition bias toward basic and acidic residues; it reads SLSKEQQTRKSKNKMFEF.

The protein resides in the nucleus. Functionally, transcription repressor. This Drosophila simulans (Fruit fly) protein is Zinc finger CCCH-type with G patch domain-containing protein.